The primary structure comprises 183 residues: Regulatory protein RecX (183 aa).

Polar residues predominate over residues 1 to 12; that stretch reads MTSFPHPSTSES. The disordered stretch occupies residues 1 to 26; sequence MTSFPHPSTSESGPDPDSEPNREEQA.

It belongs to the RecX family.

Its subcellular location is the cytoplasm. In terms of biological role, modulates RecA activity. In Mycobacterium sp. (strain KMS), this protein is Regulatory protein RecX.